The following is a 906-amino-acid chain: MPLRLDIKRKLTARSDRVKSVDLHPTEPWMLASLYNGSVCVWNHETQTLVKTFEVCDLPVRAAKFVARKNWVVTGADDMQIRVFNYNTLERVHMFEAHSDYIRCIAVHPTQPFILTSSDDMLIKLWDWDKKWSCSQVFEGHTHYVMQIVINPKDNNQFASASLDRTIKVWQLGSSSPNFTLEGHEKGVNCIDYYSGGDKPYLISGADDRLVKIWDYQNKTCVQTLEGHAQNVSCASFHPELPIIITGSEDGTVRIWHSSTYRLESTLNYGMERVWCVASLRGSNNVALGCDEGSIIVKLGREEPAMSMDANGKIIWAKHSEVQQANLKAMGNAEIKDGERLPLAVKDMGSCEIYPQTIQHNPNGRFVVVCGDGEYIIYTAMALRNKSFGSAQEFAWAHDSSEYAIRESNSVVKIFKNFKEKKSFKPDFGAESIYGGFLLGVRSVNGLAFYDWDNTELIRRIEIQPKHIFWSGSGELVCIATEESFFILKYLSEKVLAAQETHEGVTEDGIEDAFEVLGEIQEIVKTGLWVGDCFIYTSSVNRLNYYVGGEIVTIAHLDRTMYLLGYIPKDNRLYLGDKELNIVSYSLLVSVLEYQTAVMRRDFSMADKVLPTIPKEQRTRVAHFLEKQGFKQQALTVSTDPEHRFELALQLGELKIAYQLAVEAESEQKWKQLAELAISKCQFGLAQECLHHAQDYGGLLLLATASGNANMVNKLAEGAERDGKNNVAFMSYFLQGKVDACLELLIRTGRLPEAAFLARTYLPSQVSRVVKLWRENLSKVNQKAAESLADPTEYENLFPGLKEAFVVEEWVKETHADLWPAKQHPLVTPNEERNVMEEAKGFQPSRSTAQQELDGKPASPTPVIVASHTANKEEKSLLELEVDLDNLELEDIDTTDINLDEDILDD.

8 WD repeats span residues 13–52 (ARSD…LVKT), 55–94 (VCDL…RVHM), 97–136 (AHSD…SCSQ), 140–180 (GHTH…PNFT), 183–224 (GHEK…CVQT), 227–266 (GHAQ…LEST), 350–388 (SCEI…NKSF), and 390–425 (SAQE…KSFK). Lys-627 is modified (N6-acetyllysine). The WD 9 repeat unit spans residues 746–783 (IRTGRLPEAAFLARTYLPSQVSRVVKLWRENLSKVNQK). The segment at 837 to 862 (EEAKGFQPSRSTAQQELDGKPASPTP) is disordered. Phosphoserine is present on Ser-859. Phosphothreonine is present on Thr-861. A coiled-coil region spans residues 866-890 (ASHTANKEEKSLLELEVDLDNLELE).

It belongs to the WD repeat COPB2 family. As to quaternary structure, oligomeric complex that consists of at least the alpha, beta, beta', gamma, delta, epsilon and zeta subunits. Probably interacts with PEX11A. Interacts with SCYL1. Interacts with JAGN1.

The protein localises to the cytoplasm. It localises to the cytosol. Its subcellular location is the golgi apparatus membrane. It is found in the cytoplasmic vesicle. The protein resides in the COPI-coated vesicle membrane. The coatomer is a cytosolic protein complex that binds to dilysine motifs and reversibly associates with Golgi non-clathrin-coated vesicles, which further mediate biosynthetic protein transport from the ER, via the Golgi up to the trans Golgi network. Coatomer complex is required for budding from Golgi membranes, and is essential for the retrograde Golgi-to-ER transport of dilysine-tagged proteins. In mammals, the coatomer can only be recruited by membranes associated to ADP-ribosylation factors (ARFs), which are small GTP-binding proteins; the complex also influences the Golgi structural integrity, as well as the processing, activity, and endocytic recycling of LDL receptors. In terms of biological role, this coatomer complex protein, essential for Golgi budding and vesicular trafficking, is a selective binding protein (RACK) for protein kinase C, epsilon type. It binds to Golgi membranes in a GTP-dependent manner. This Macaca fascicularis (Crab-eating macaque) protein is Coatomer subunit beta' (COPB2).